We begin with the raw amino-acid sequence, 512 residues long: Cytochrome P450 1A2 (512 aa).

Serine 65 is a glycosylation site (O-linked (GlcNAc) serine). Phenylalanine 222 lines the substrate pocket. A heme-binding site is contributed by cysteine 454.

This sequence belongs to the cytochrome P450 family. In terms of assembly, interacts with PGRMC1; the interaction requires PGRMC1 homodimerization. Requires heme as cofactor.

The protein resides in the endoplasmic reticulum membrane. It is found in the microsome membrane. It catalyses the reaction an organic molecule + reduced [NADPH--hemoprotein reductase] + O2 = an alcohol + oxidized [NADPH--hemoprotein reductase] + H2O + H(+). The enzyme catalyses 17beta-estradiol + reduced [NADPH--hemoprotein reductase] + O2 = 2-hydroxy-17beta-estradiol + oxidized [NADPH--hemoprotein reductase] + H2O + H(+). It carries out the reaction 17beta-estradiol + reduced [NADPH--hemoprotein reductase] + O2 = 4-hydroxy-17beta-estradiol + oxidized [NADPH--hemoprotein reductase] + H2O + H(+). The catalysed reaction is estrone + reduced [NADPH--hemoprotein reductase] + O2 = 2-hydroxyestrone + oxidized [NADPH--hemoprotein reductase] + H2O + H(+). It catalyses the reaction estrone + reduced [NADPH--hemoprotein reductase] + O2 = 4-hydroxyestrone + oxidized [NADPH--hemoprotein reductase] + H2O + H(+). The enzyme catalyses cholesterol + reduced [NADPH--hemoprotein reductase] + O2 = 25-hydroxycholesterol + oxidized [NADPH--hemoprotein reductase] + H2O + H(+). It carries out the reaction all-trans-retinol + reduced [NADPH--hemoprotein reductase] + O2 = all-trans-retinal + oxidized [NADPH--hemoprotein reductase] + 2 H2O + H(+). The catalysed reaction is all-trans-retinal + reduced [NADPH--hemoprotein reductase] + O2 = all-trans-retinoate + oxidized [NADPH--hemoprotein reductase] + H2O + 2 H(+). It catalyses the reaction (5Z,8Z,11Z,14Z)-eicosatetraenoate + reduced [NADPH--hemoprotein reductase] + O2 = (14R,15S)-epoxy-(5Z,8Z,11Z)-eicosatrienoate + oxidized [NADPH--hemoprotein reductase] + H2O + H(+). The enzyme catalyses (5Z,8Z,11Z,14Z)-eicosatetraenoate + reduced [NADPH--hemoprotein reductase] + O2 = (14S,15R)-epoxy-(5Z,8Z,11Z)-eicosatrienoate + oxidized [NADPH--hemoprotein reductase] + H2O + H(+). It carries out the reaction (5Z,8Z,11Z,14Z,17Z)-eicosapentaenoate + reduced [NADPH--hemoprotein reductase] + O2 = (17R,18S)-epoxy-(5Z,8Z,11Z,14Z)-eicosatetraenoate + oxidized [NADPH--hemoprotein reductase] + H2O + H(+). The catalysed reaction is (4Z,7Z,10Z,13Z,16Z,19Z)-docosahexaenoate + reduced [NADPH--hemoprotein reductase] + O2 = (19R,20S)-epoxy-(4Z,7Z,10Z,13Z,16Z)-docosapentaenoate + oxidized [NADPH--hemoprotein reductase] + H2O + H(+). It catalyses the reaction (5S)-hydroperoxy-(6E,8Z,11Z,14Z)-eicosatetraenoate = 5-oxo-(6E,8Z,11Z,14Z)-eicosatetraenoate + H2O. The enzyme catalyses (12S)-hydroperoxy-(5Z,8Z,10E,14Z)-eicosatetraenoate = 12-oxo-(5Z,8Z,10E,14Z)-eicosatetraenoate + H2O. It carries out the reaction (15S)-hydroperoxy-(5Z,8Z,11Z,13E)-eicosatetraenoate = 15-oxo-(5Z,8Z,11Z,13E)-eicosatetraenoate + H2O. The catalysed reaction is (13S)-hydroperoxy-(9Z,11E)-octadecadienoate = 13-oxo-(9Z,11E)-octadecadienoate + H2O. It catalyses the reaction (5Z,8Z,11Z,14Z)-eicosatetraenoate + reduced [NADPH--hemoprotein reductase] + O2 = 13-hydroxy-(5Z,8Z,11Z,14Z)-eicosatetraenoate + oxidized [NADPH--hemoprotein reductase] + H2O + H(+). The enzyme catalyses (5Z,8Z,11Z,14Z)-eicosatetraenoate + reduced [NADPH--hemoprotein reductase] + O2 = 19-hydroxy-(5Z,8Z,11Z,14Z)-eicosatetraenoate + oxidized [NADPH--hemoprotein reductase] + H2O + H(+). It carries out the reaction (9Z,12Z)-octadecadienoate + reduced [NADPH--hemoprotein reductase] + O2 = 11-hydroxy-(9Z,12Z)-octadecadienoate + oxidized [NADPH--hemoprotein reductase] + H2O + H(+). It functions in the pathway cofactor metabolism; retinol metabolism. It participates in steroid metabolism; cholesterol metabolism. Its pathway is lipid metabolism; arachidonate metabolism. Functionally, a cytochrome P450 monooxygenase involved in the metabolism of various endogenous substrates, including fatty acids, steroid hormones and vitamins. Mechanistically, uses molecular oxygen inserting one oxygen atom into a substrate, and reducing the second into a water molecule, with two electrons provided by NADPH via cytochrome P450 reductase (NADPH--hemoprotein reductase). Catalyzes the hydroxylation of carbon-hydrogen bonds. Exhibits high catalytic activity for the formation of hydroxyestrogens from estrone (E1) and 17beta-estradiol (E2), namely 2-hydroxy E1 and E2. Metabolizes cholesterol toward 25-hydroxycholesterol, a physiological regulator of cellular cholesterol homeostasis. May act as a major enzyme for all-trans retinoic acid biosynthesis in the liver. Catalyzes two successive oxidative transformation of all-trans retinol to all-trans retinal and then to the active form all-trans retinoic acid. Primarily catalyzes stereoselective epoxidation of the last double bond of polyunsaturated fatty acids (PUFA), displaying a strong preference for the (R,S) stereoisomer. Catalyzes bisallylic hydroxylation and omega-1 hydroxylation of PUFA. May also participate in eicosanoids metabolism by converting hydroperoxide species into oxo metabolites (lipoxygenase-like reaction, NADPH-independent). Plays a role in the oxidative metabolism of xenobiotics. Catalyzes the N-hydroxylation of heterocyclic amines and the O-deethylation of phenacetin. Metabolizes caffeine via N3-demethylation. The polypeptide is Cytochrome P450 1A2 (CYP1A2) (Felis catus (Cat)).